Here is a 631-residue protein sequence, read N- to C-terminus: Dolichyl-diphosphooligosaccharide--protein glycosyltransferase subunit 2 (631 aa).

The N-terminal stretch at 1–22 (MAPPGSSAVFLLALTITASTQA) is a signal peptide. At 23-540 (LTPTHYLTKH…REPEKRPPTV (518 aa)) the chain is on the lumenal side. Residue Asn106 is glycosylated (N-linked (GlcNAc...) asparagine). Lys154 is covalently cross-linked (Glycyl lysine isopeptide (Lys-Gly) (interchain with G-Cter in ubiquitin)). Residues 541 to 561 (VSNTFTALILSPLLLLFALWI) traverse the membrane as a helical segment. Residues 562-571 (RIGANVSNFT) lie on the Cytoplasmic side of the membrane. The chain crosses the membrane as a helical span at residues 572 to 592 (FAPSTVIFHLGHAAMLGLMYV). The Lumenal portion of the chain corresponds to 593–596 (YWTQ). The helical transmembrane segment at 597–617 (LNMFQTLKYLAVLGTVTFLAG) threads the bilayer. The Cytoplasmic portion of the chain corresponds to 618–631 (NRMLAQQAVKRTAH).

Belongs to the SWP1 family. As to quaternary structure, component of the oligosaccharyltransferase (OST) complex. OST exists in two different complex forms which contain common core subunits RPN1, RPN2, OST48, OST4, DAD1 and TMEM258, either STT3A or STT3B as catalytic subunits, and form-specific accessory subunits. STT3A complex assembly occurs through the formation of 3 subcomplexes. Subcomplex 1 contains RPN1 and TMEM258, subcomplex 2 contains the STT3A-specific subunits STT3A, DC2/OSTC, and KCP2 as well as the core subunit OST4, and subcomplex 3 contains RPN2, DAD1, and OST48. The STT3A complex can form stable complexes with the Sec61 complex or with both the Sec61 and TRAP complexes. Interacts with DDI2. Interacts with TMEM35A/NACHO.

It is found in the endoplasmic reticulum. The protein localises to the endoplasmic reticulum membrane. It participates in protein modification; protein glycosylation. Functionally, subunit of the oligosaccharyl transferase (OST) complex that catalyzes the initial transfer of a defined glycan (Glc(3)Man(9)GlcNAc(2) in eukaryotes) from the lipid carrier dolichol-pyrophosphate to an asparagine residue within an Asn-X-Ser/Thr consensus motif in nascent polypeptide chains, the first step in protein N-glycosylation. N-glycosylation occurs cotranslationally and the complex associates with the Sec61 complex at the channel-forming translocon complex that mediates protein translocation across the endoplasmic reticulum (ER). All subunits are required for a maximal enzyme activity. In Rattus norvegicus (Rat), this protein is Dolichyl-diphosphooligosaccharide--protein glycosyltransferase subunit 2.